Here is a 203-residue protein sequence, read N- to C-terminus: Small ribosomal subunit protein uS2 (203 aa).

This sequence belongs to the universal ribosomal protein uS2 family.

This chain is Small ribosomal subunit protein uS2, found in Methanopyrus kandleri (strain AV19 / DSM 6324 / JCM 9639 / NBRC 100938).